The following is a 409-amino-acid chain: MSVMDAIVVKKPQAARPSSGAEKPSLIGLSREEMAAALREKGVPEKQIKMRVSQLWNWIYVRGVSDFDHMTNVAKDMREMLKQHFTIARPEIVEEQVSNDGTRKWLLRFPARGAGRPVEIEAVYIPEEGRGTLCISSQVGCTLTCSFCHTGTQRLVRNLTAEEILSQLLLARDRLGDFPDREAPQGTIMPAEGRKVSNIVMMGMGEPLYNFDAVKQALLIATDGDGLSLSKRRVTLSTSGVVPEIFRTGEEIGVMLAISLHAVRDDLRDILVPINKKYPLKELIDACKAYPGLSNARRITFEYVMLKDVNDSLEDAKGLIKLLKGVPAKINLIPFNPWPGTNYQCSDWEQIEKFADFINSAGYASPIRTPRGRDILAACGQLKSESERMRKTERLAFEAMMIANHGADD.

Glu-121 serves as the catalytic Proton acceptor. In terms of domain architecture, Radical SAM core spans 127–376 (EEGRGTLCIS…IRTPRGRDIL (250 aa)). A disulfide bond links Cys-134 and Cys-379. Residues Cys-141, Cys-145, and Cys-148 each coordinate [4Fe-4S] cluster. S-adenosyl-L-methionine-binding positions include 205–206 (GE), Ser-237, 259–261 (SLH), and Asn-336. The active-site S-methylcysteine intermediate is Cys-379.

It belongs to the radical SAM superfamily. RlmN family. The cofactor is [4Fe-4S] cluster.

Its subcellular location is the cytoplasm. It carries out the reaction adenosine(2503) in 23S rRNA + 2 reduced [2Fe-2S]-[ferredoxin] + 2 S-adenosyl-L-methionine = 2-methyladenosine(2503) in 23S rRNA + 5'-deoxyadenosine + L-methionine + 2 oxidized [2Fe-2S]-[ferredoxin] + S-adenosyl-L-homocysteine. The catalysed reaction is adenosine(37) in tRNA + 2 reduced [2Fe-2S]-[ferredoxin] + 2 S-adenosyl-L-methionine = 2-methyladenosine(37) in tRNA + 5'-deoxyadenosine + L-methionine + 2 oxidized [2Fe-2S]-[ferredoxin] + S-adenosyl-L-homocysteine. Functionally, specifically methylates position 2 of adenine 2503 in 23S rRNA and position 2 of adenine 37 in tRNAs. m2A2503 modification seems to play a crucial role in the proofreading step occurring at the peptidyl transferase center and thus would serve to optimize ribosomal fidelity. The sequence is that of Dual-specificity RNA methyltransferase RlmN from Rhizobium etli (strain ATCC 51251 / DSM 11541 / JCM 21823 / NBRC 15573 / CFN 42).